Consider the following 187-residue polypeptide: Protein GrpE (187 aa).

The segment at 1–22 (MADEQNLDAQAQDQAAEAGAGD) is disordered. Over residues 7-22 (LDAQAQDQAAEAGAGD) the composition is skewed to low complexity.

The protein belongs to the GrpE family. In terms of assembly, homodimer.

It is found in the cytoplasm. In terms of biological role, participates actively in the response to hyperosmotic and heat shock by preventing the aggregation of stress-denatured proteins, in association with DnaK and GrpE. It is the nucleotide exchange factor for DnaK and may function as a thermosensor. Unfolded proteins bind initially to DnaJ; upon interaction with the DnaJ-bound protein, DnaK hydrolyzes its bound ATP, resulting in the formation of a stable complex. GrpE releases ADP from DnaK; ATP binding to DnaK triggers the release of the substrate protein, thus completing the reaction cycle. Several rounds of ATP-dependent interactions between DnaJ, DnaK and GrpE are required for fully efficient folding. In Pseudomonas syringae pv. tomato (strain ATCC BAA-871 / DC3000), this protein is Protein GrpE.